A 110-amino-acid chain; its full sequence is Protein SPIRAL1-like 2 (110 aa).

A disordered region spans residues 28 to 110; sequence AVNKTPAETE…LDYLFGGGSN (83 aa). Low complexity predominate over residues 40 to 52; it reads AHAPPTQAAAANA. Residues 63–82 show a composition bias toward polar residues; it reads LNSNSANNYMRAEGQNTGNF. Position 67 is a phosphoserine (S67). Residues 95–110 are compositionally biased toward gly residues; it reads PGGGSSLDYLFGGGSN.

Belongs to the SPIRAL1 family. Ubiquitous.

In terms of biological role, acts redundantly with SPR1 in maintaining the cortical microtubules organization essential for anisotropic cell growth. This chain is Protein SPIRAL1-like 2 (SP1L2), found in Arabidopsis thaliana (Mouse-ear cress).